Here is a 359-residue protein sequence, read N- to C-terminus: Stearoyl-CoA desaturase (359 aa).

Residues 1–72 (MPAHLLQEEI…EGPRPKLEYV (72 aa)) lie on the Cytoplasmic side of the membrane. A helical membrane pass occupies residues 73–93 (WRNIILMSLLHLGALYGIILI). N75 contacts substrate. The Lumenal segment spans residues 94–97 (PTCK). Residues 98-118 (IYTLLWAFAYYLLSAVGVTAG) traverse the membrane as a helical segment. Residues 119-217 (AHRLWSHRTY…EKLVMFQRRY (99 aa)) are Cytoplasmic-facing. The Fe cation site is built by H120 and H125. The Histidine box-1 motif lies at 120 to 125 (HRLWSH). Residues N148, R155, and D156 each coordinate substrate. Fe cation is bound by residues H157, H160, and H161. Positions 157-161 (HRAHH) match the Histidine box-2 motif. Substrate contacts are provided by R188 and K189. Residue S203 is modified to Phosphoserine. A helical transmembrane segment spans residues 218-237 (YKPGILLMCFILPTIVPWYC). The Lumenal portion of the chain corresponds to 238–241 (WGEA). Residues 242–263 (FPQSLFVATFLRYAIVLNATWL) form a helical membrane-spanning segment. Position 262 (W262) interacts with substrate. Residues 264–359 (VNSAAHLYGY…RTGDESYKSG (96 aa)) lie on the Cytoplasmic side of the membrane. The Fe cation site is built by H269, H298, H301, and H302. The Histidine box-3 signature appears at 298–302 (HNYHH).

The protein belongs to the fatty acid desaturase type 1 family. The cofactor is Fe(2+).

It localises to the endoplasmic reticulum membrane. It catalyses the reaction octadecanoyl-CoA + 2 Fe(II)-[cytochrome b5] + O2 + 2 H(+) = (9Z)-octadecenoyl-CoA + 2 Fe(III)-[cytochrome b5] + 2 H2O. It carries out the reaction hexadecanoyl-CoA + 2 Fe(II)-[cytochrome b5] + O2 + 2 H(+) = (9Z)-hexadecenoyl-CoA + 2 Fe(III)-[cytochrome b5] + 2 H2O. In terms of biological role, stearoyl-CoA desaturase that utilizes O(2) and electrons from reduced cytochrome b5 to introduce the first double bond into saturated fatty acyl-CoA substrates. Catalyzes the insertion of a cis double bond at the delta-9 position into fatty acyl-CoA substrates including palmitoyl-CoA and stearoyl-CoA. Gives rise to a mixture of 16:1 and 18:1 unsaturated fatty acids. Plays an important role in lipid biosynthesis. Plays an important role in regulating the expression of genes that are involved in lipogenesis and in regulating mitochondrial fatty acid oxidation. Plays an important role in body energy homeostasis. Contributes to the biosynthesis of membrane phospholipids, cholesterol esters and triglycerides. This Sus scrofa (Pig) protein is Stearoyl-CoA desaturase (SCD).